A 209-amino-acid chain; its full sequence is Ribosomal RNA large subunit methyltransferase E (209 aa).

Positions 63, 65, 83, 99, and 124 each coordinate S-adenosyl-L-methionine. Lysine 164 (proton acceptor) is an active-site residue.

It belongs to the class I-like SAM-binding methyltransferase superfamily. RNA methyltransferase RlmE family.

The protein localises to the cytoplasm. The enzyme catalyses uridine(2552) in 23S rRNA + S-adenosyl-L-methionine = 2'-O-methyluridine(2552) in 23S rRNA + S-adenosyl-L-homocysteine + H(+). Its function is as follows. Specifically methylates the uridine in position 2552 of 23S rRNA at the 2'-O position of the ribose in the fully assembled 50S ribosomal subunit. This is Ribosomal RNA large subunit methyltransferase E from Shewanella pealeana (strain ATCC 700345 / ANG-SQ1).